The following is a 311-amino-acid chain: Methionyl-tRNA formyltransferase (311 aa).

110-113 (SLLP) is a binding site for (6S)-5,6,7,8-tetrahydrofolate.

This sequence belongs to the Fmt family.

It carries out the reaction L-methionyl-tRNA(fMet) + (6R)-10-formyltetrahydrofolate = N-formyl-L-methionyl-tRNA(fMet) + (6S)-5,6,7,8-tetrahydrofolate + H(+). Attaches a formyl group to the free amino group of methionyl-tRNA(fMet). The formyl group appears to play a dual role in the initiator identity of N-formylmethionyl-tRNA by promoting its recognition by IF2 and preventing the misappropriation of this tRNA by the elongation apparatus. This is Methionyl-tRNA formyltransferase from Streptococcus mutans serotype c (strain ATCC 700610 / UA159).